Here is a 457-residue protein sequence, read N- to C-terminus: GTPase Der (457 aa).

2 EngA-type G domains span residues 4 to 169 and 177 to 352; these read PTIA…PENN and IMMS…NQHR. GTP contacts are provided by residues 10 to 17, 57 to 61, 120 to 123, 183 to 190, 230 to 234, and 295 to 298; these read GRPNVGKS, DTGGL, NKCE, DTAGI, and NKWD. Residues 353 to 438 form the KH-like domain; it reads RRVTTSVVNE…PLILLWRGKQ (86 aa).

The protein belongs to the TRAFAC class TrmE-Era-EngA-EngB-Septin-like GTPase superfamily. EngA (Der) GTPase family. As to quaternary structure, associates with the 50S ribosomal subunit.

GTPase that plays an essential role in the late steps of ribosome biogenesis. The chain is GTPase Der from Prochlorococcus marinus (strain AS9601).